The chain runs to 171 residues: Endoribonuclease YbeY (171 aa).

Positions 130, 134, and 140 each coordinate Zn(2+).

It belongs to the endoribonuclease YbeY family. It depends on Zn(2+) as a cofactor.

It localises to the cytoplasm. Its function is as follows. Single strand-specific metallo-endoribonuclease involved in late-stage 70S ribosome quality control and in maturation of the 3' terminus of the 16S rRNA. This is Endoribonuclease YbeY from Neisseria meningitidis serogroup A / serotype 4A (strain DSM 15465 / Z2491).